The sequence spans 302 residues: Sodium/potassium-transporting ATPase subunit beta-233 (302 aa).

Over 1–30 (MSGNKDSDGGWKTFIWNSEKKELLGRTGCS) the chain is Cytoplasmic. Residues 31–51 (WFKILLFYVIFYGCLAAVFVG) form a helical; Signal-anchor for type II membrane protein membrane-spanning segment. The Extracellular portion of the chain corresponds to 52 to 302 (TIQALLLTLS…FDIKITVNDS (251 aa)). Intrachain disulfides connect cysteine 125/cysteine 148 and cysteine 158/cysteine 174. N-linked (GlcNAc...) asparagine glycans are attached at residues asparagine 193 and asparagine 263. Cysteine 213 and cysteine 274 are disulfide-bonded.

The protein belongs to the X(+)/potassium ATPases subunit beta family. The sodium/potassium-transporting ATPase is composed of a catalytic alpha subunit, an auxiliary non-catalytic beta subunit and an additional regulatory subunit. In terms of processing, glycosylated. In terms of tissue distribution, expressed mainly in epithelial tissues.

It is found in the cell membrane. This is the non-catalytic component of the active enzyme, which catalyzes the hydrolysis of ATP coupled with the exchange of Na(+) and K(+) ions across the plasma membrane. The beta subunit regulates, through assembly of alpha/beta heterodimers, the number of sodium pumps transported to the plasma membrane. This Anguilla anguilla (European freshwater eel) protein is Sodium/potassium-transporting ATPase subunit beta-233.